Consider the following 216-residue polypeptide: MDNPQKFSNSKEVINFLSESFPACFSVTGDAKPLKIGIFQDLAQRLEEEERVSKTLLRSSLRHYTNSWRYLHSVKEGAFRVDLDGQQAAPIEKEHADHAQAQLEESKAKVAEKRKAQNAAKPGAKKSYKSKTVPAFKSSPKGTNQDNVKPKAKLPPPEKLSAEQLVAGTSVTVKIGKSPMPATITDVSKDGVQVQLDTGMVVKVQVDNLRLARSKR.

Positions 105 to 115 (ESKAKVAEKRK) are enriched in basic and acidic residues. A disordered region spans residues 105–159 (ESKAKVAEKRKAQNAAKPGAKKSYKSKTVPAFKSSPKGTNQDNVKPKAKLPPPEK).

It belongs to the ProQ family.

It is found in the cytoplasm. Functionally, RNA chaperone with significant RNA binding, RNA strand exchange and RNA duplexing activities. In Pseudoalteromonas atlantica (strain T6c / ATCC BAA-1087), this protein is RNA chaperone ProQ.